The chain runs to 80 residues: 17 kDa surface antigen (80 aa).

A compositionally biased stretch (polar residues) spans 47–58; the sequence is ALETTPSGTSIE. A disordered region spans residues 47–80; it reads ALETTPSGTSIEWRNPDNGNYGYVTPSKTYKNST.

The protein belongs to the rickettsiale 17 kDa surface antigen family.

It localises to the cell outer membrane. The sequence is that of 17 kDa surface antigen (omp) from Rickettsia canadensis.